The sequence spans 169 residues: Transcription regulatory protein SNF11 (169 aa).

Residues 1 to 24 (MSSEIAYSNTNTNTENENRNTGAG) form a disordered region. N-acetylserine is present on S2. The segment covering 9-21 (NTNTNTENENRNT) has biased composition (low complexity). 8 repeat units span residues 28–31 (NTNA), 32–35 (NANA), 36–39 (NATA), 40–43 (NATA), 44–47 (NATA), 48–51 (NATA), 76–80 (LLARV), and 160–165 (LLLARV). A 6 X 4 AA tandem repeats of N-[AT]-[NT]-A region spans residues 28-51 (NTNANANANATANATANATANATA). A 2 X 5 AA repeats of L-L-A-R-V region spans residues 76-165 (LLARVIQMNN…SKLYLLLARV (90 aa)).

Component of the SWI/SNF global transcription activator complex. The 1.14 MDa SWI/SNF complex is composed of 11 different subunits: one copy each of SWI1, SNF2/SWI2, SNF5, SNF12/SWP73, ARP7/SWP61, ARP9/SWP59; two copies each of SWI3, SNF6, SNF11, SWP82; and three copies of TAF14/SWP29.

It is found in the nucleus. In terms of biological role, involved in transcriptional activation. Component of the SWI/SNF complex, an ATP-dependent chromatin remodeling complex, which is required for the positive and negative regulation of gene expression of a large number of genes. It changes chromatin structure by altering DNA-histone contacts within a nucleosome, leading eventually to a change in nucleosome position, thus facilitating or repressing binding of gene-specific transcription factors. In Saccharomyces cerevisiae (strain ATCC 204508 / S288c) (Baker's yeast), this protein is Transcription regulatory protein SNF11 (SNF11).